A 342-amino-acid polypeptide reads, in one-letter code: MKFLDLCKVYIRSGGGGGGCVSFRREKFIEFGGPDGGDGGNGGSVWAEAVEGLNTLIDFRYQQHFFAKSGQPGMGSQRTGKSGEDIVLKVPVGTEIIDEDEETVIADLTEVGQRILLAQGGNGGWGNLRFKSSTNRAPARANPGQPGIDRTIWLRLKLIADAGLLGLPNAGKSTFLSATSNARPKIADYPFTTLVPNLGVVGVDGKEFVIADIPGLIEGASEGRGLGDQFLAHVERCSVLLHLVDGTSSTIVKDYRTIIGELEAYGGDLAGKPRITAMNKIDAMDPRQISDRRRALEKATGGKVFTISGVAGTGLMEVLRALWAEIDGARGDAVEEHVPWQP.

One can recognise an Obg domain in the interval 1 to 159 (MKFLDLCKVY…RTIWLRLKLI (159 aa)). The OBG-type G domain maps to 160–327 (ADAGLLGLPN…VLRALWAEID (168 aa)). Residues 166–173 (GLPNAGKS), 191–195 (FTTLV), 212–215 (DIPG), 279–282 (NKID), and 308–310 (SGV) contribute to the GTP site. Mg(2+)-binding residues include S173 and T193.

Belongs to the TRAFAC class OBG-HflX-like GTPase superfamily. OBG GTPase family. In terms of assembly, monomer. The cofactor is Mg(2+).

Its subcellular location is the cytoplasm. An essential GTPase which binds GTP, GDP and possibly (p)ppGpp with moderate affinity, with high nucleotide exchange rates and a fairly low GTP hydrolysis rate. Plays a role in control of the cell cycle, stress response, ribosome biogenesis and in those bacteria that undergo differentiation, in morphogenesis control. In Cereibacter sphaeroides (strain ATCC 17025 / ATH 2.4.3) (Rhodobacter sphaeroides), this protein is GTPase Obg.